A 736-amino-acid polypeptide reads, in one-letter code: Oligopeptide transporter 6 (736 aa).

15 consecutive transmembrane segments (helical) span residues 43–63, 66–86, 116–136, 148–168, 210–230, 258–278, 288–308, 357–377, 412–432, 443–463, 489–511, 527–547, 602–622, 645–665, and 678–698; these read MWVL…FFWY, MPLS…GHLM, VLIT…HILS, FLPA…WAGL, FFLI…YLFT, LGIG…GSPL, VAIG…WLNI, FFAV…VHVL, VPLW…MFIS, WWGV…IGVI, PVAN…TFIS, FMAQ…TAWW, WFFL…KMFP, ATAV…HFIF, and VLSG…FLAL.

It belongs to the oligopeptide OPT transporter (TC 2.A.67.1) family. Expressed in flowers and roots, and at a low level in leaves and stems. Detected in the cambial zone of the vascular bundles and in the region of lateral root initiation. Low expression in the vascular network of the petals and high in the stamen filaments and the gynoecium.

Its subcellular location is the membrane. Its function is as follows. Involved in the translocation of tetra- and pentapeptides across the cellular membrane in an energy-dependent manner. Also involved in transport of glutathione derivatives and metal complexes, and may be involved in stress resistance. This Arabidopsis thaliana (Mouse-ear cress) protein is Oligopeptide transporter 6 (OPT6).